A 333-amino-acid polypeptide reads, in one-letter code: L-lactate dehydrogenase A chain (333 aa).

NAD(+) is bound by residues 30 to 58 and R100; that span reads GMVG…MEDK. Substrate is bound by residues R107, N139, and R170. N139 is a binding site for NAD(+). The Proton acceptor role is filled by H194. Position 249 (T249) interacts with substrate.

It belongs to the LDH/MDH superfamily. LDH family. Homotetramer.

The protein resides in the cytoplasm. It carries out the reaction (S)-lactate + NAD(+) = pyruvate + NADH + H(+). It functions in the pathway fermentation; pyruvate fermentation to lactate; (S)-lactate from pyruvate: step 1/1. The sequence is that of L-lactate dehydrogenase A chain (ldha) from Cyprinus carpio (Common carp).